An 815-amino-acid chain; its full sequence is Lon protease 1 (815 aa).

A Lon N-terminal domain is found at 14-211 (IAILPLLGTV…KLNEVLTREL (198 aa)). Residue 370-377 (GPPGVGKT) participates in ATP binding. In terms of domain architecture, Lon proteolytic spans 606 to 787 (TDRPGIVTGL…GQVIELALRA (182 aa)). Catalysis depends on residues Ser693 and Lys736.

This sequence belongs to the peptidase S16 family. In terms of assembly, homohexamer. Organized in a ring with a central cavity.

The protein resides in the cytoplasm. It carries out the reaction Hydrolysis of proteins in presence of ATP.. Functionally, ATP-dependent serine protease that mediates the selective degradation of mutant and abnormal proteins as well as certain short-lived regulatory proteins. Required for cellular homeostasis and for survival from DNA damage and developmental changes induced by stress. Degrades polypeptides processively to yield small peptide fragments that are 5 to 10 amino acids long. Binds to DNA in a double-stranded, site-specific manner. This is Lon protease 1 from Herpetosiphon aurantiacus (strain ATCC 23779 / DSM 785 / 114-95).